Here is a 118-residue protein sequence, read N- to C-terminus: Large ribosomal subunit protein uL22 (118 aa).

Belongs to the universal ribosomal protein uL22 family. As to quaternary structure, part of the 50S ribosomal subunit.

In terms of biological role, this protein binds specifically to 23S rRNA; its binding is stimulated by other ribosomal proteins, e.g. L4, L17, and L20. It is important during the early stages of 50S assembly. It makes multiple contacts with different domains of the 23S rRNA in the assembled 50S subunit and ribosome. Its function is as follows. The globular domain of the protein is located near the polypeptide exit tunnel on the outside of the subunit, while an extended beta-hairpin is found that lines the wall of the exit tunnel in the center of the 70S ribosome. The protein is Large ribosomal subunit protein uL22 of Thermomicrobium roseum (strain ATCC 27502 / DSM 5159 / P-2).